A 193-amino-acid chain; its full sequence is Interferon epsilon (193 aa).

A signal peptide spans Met1–Ser21. Cysteines 53 and 163 form a disulfide. An N-linked (GlcNAc...) asparagine glycan is attached at Asn139.

Belongs to the alpha/beta interferon family.

It localises to the secreted. Functionally, type I interferon required for maintaining basal levels of IFN-regulated genes, including 2'-5'-oligoadenylate synthetase, IRF7 and ISG15, in the female reproductive tract. Directly mediates protection against viral and bacterial genital infections. The protein is Interferon epsilon (IFNE) of Sus scrofa (Pig).